A 358-amino-acid chain; its full sequence is 2-oxoisovalerate dehydrogenase subunit beta 2, mitochondrial (358 aa).

Residues 1 to 16 (MAAALVRRFCRGSSFP) constitute a mitochondrion transit peptide. Thiamine diphosphate is bound at residue Tyr-119. The K(+) site is built by Gly-145, Leu-147, Thr-148, Asp-198, and Asn-200.

In terms of assembly, heterotetramer of alpha and beta chains. Thiamine diphosphate is required as a cofactor. In terms of tissue distribution, expressed in the non-photosynthetic organs such as siliques, flowers and roots.

The protein localises to the mitochondrion matrix. The catalysed reaction is N(6)-[(R)-lipoyl]-L-lysyl-[protein] + 3-methyl-2-oxobutanoate + H(+) = N(6)-[(R)-S(8)-2-methylpropanoyldihydrolipoyl]-L-lysyl-[protein] + CO2. The branched-chain alpha-keto dehydrogenase complex catalyzes the overall conversion of alpha-keto acids to acyl-CoA and CO(2). It contains multiple copies of three enzymatic components: branched-chain alpha-keto acid decarboxylase (E1), lipoamide acyltransferase (E2) and lipoamide dehydrogenase (E3). Required during sugar starvation and acts under the control of a sugar-sensing mechanism involving Ser/Thr kinases and phosphatases. The polypeptide is 2-oxoisovalerate dehydrogenase subunit beta 2, mitochondrial (DIN4) (Arabidopsis thaliana (Mouse-ear cress)).